A 1214-amino-acid polypeptide reads, in one-letter code: Peregrin (1214 aa).

The C2H2-type zinc-finger motif lies at 21-47; sequence YECPVETCRKVYKSYSGIEYHLYHYDH. 2 disordered regions span residues 43 to 87 and 118 to 177; these read YHYD…SPGR and VVSE…PKLP. The segment covering 58 to 67 has biased composition (basic residues); the sequence is LRKHKKKGRQ. Residues 59-222 are interaction with KAT6A and KAT6B; sequence RKHKKKGRQS…VEYDMDEEDY (164 aa). Over residues 74–85 the composition is skewed to low complexity; it reads QSPSPSEVSQSP. The segment covering 119–130 has biased composition (acidic residues); that stretch reads VSEDEEAPEEAP. Serine 120 carries the phosphoserine modification. Lysine 147 bears the N6-acetyllysine mark. The span at 148–167 shows a compositional bias: basic residues; the sequence is SGKHKNKEKRKDSNHHHHHN. Serine 238 carries the phosphoserine modification. Residues 273-323 form a PHD-type 1 zinc finger; it reads DAVCCICNDGECQNSNVILFCDMCNLAVHQECYGVPYIPEGQWLCRRCLQS. The C2HC pre-PHD-type zinc finger occupies 327-360; it reads AVDCALCPNKGGAFKQTDDGRWAHVVCALWIPEV. The PHD-type 2 zinc-finger motif lies at 384–448; that stretch reads LTCYICKQRG…RKTAYCDIHT (65 aa). The tract at residues 448–489 is disordered; that stretch reads TPPGSARRLPALSHSEGEEDEDEEEDEGKGWSSEKVKKAKAK. Phosphoserine is present on residues serine 460 and serine 462. Residues 464 to 474 show a composition bias toward acidic residues; that stretch reads GEEDEDEEEDE. The segment at 501-821 is interaction with MEAF6 and ING5; that stretch reads LAEKRAAAPV…IKKEMTALRR (321 aa). Residues 543-1079 are required for RUNX1 and RUNX2 transcriptional activation; it reads YWTLKRQSRN…RGAGWLSEDE (537 aa). An N6-acetyllysine modification is found at lysine 580. The region spanning 628–732 is the Bromo domain; the sequence is MQLTPFLILL…EQGGAVLRQA (105 aa). A disordered region spans residues 819 to 1062; sequence LRRKLAHQRE…VGTGRGVGHS (244 aa). Basic and acidic residues predominate over residues 825-838; the sequence is HQRETGRDGPERHG. The residue at position 858 (threonine 858) is a Phosphothreonine. Low complexity predominate over residues 858 to 871; that stretch reads TDSAAEESSSQETS. A phosphoserine mark is found at serine 860, serine 917, serine 922, and serine 926. The segment covering 993 to 1021 has biased composition (low complexity); the sequence is SLPRSSSDSESSSSSSSSAASDRTSTTPS. A Phosphoserine modification is found at serine 1076. The 84-residue stretch at 1085–1168 folds into the PWWP domain; the sequence is ALDLVWAKCR…RTKLVPLGVN (84 aa). Phosphoserine is present on serine 1187.

As to quaternary structure, component of some HBO1 complex composed of KAT7/HBO1, MEAF6, ING5, and BRPF1. Component of the MOZ/MORF complex composed at least of ING5, KAT6A, KAT6B, MEAF6 and one of BRPF1, BRD1/BRPF2 and BRPF3. Interacts (via PHD-type zinc finger domains) with unmethylated histone H3 at 'Lys-4' (H3K4me0). Interacts with trimethylated 'Lys-36' of histone H3 (H3K36me3). Interacts with ING5; interaction directs BRPF1 to H4K4me3-enriched chromatin at the 5' of active genes. Interacts with KAT7. Acetylated by KAT6A. As to expression, high levels in testis.

Its subcellular location is the nucleus. The protein resides in the chromosome. It is found in the cytoplasm. Functionally, scaffold subunit of various histone acetyltransferase (HAT) complexes, such as the MOZ/MORF and HBO1 complexes, which have a histone H3 acetyltransferase activity. Plays a key role in HBO1 complex by directing KAT7/HBO1 specificity towards histone H3 'Lys-14' acetylation (H3K14ac). Some HAT complexes preferentially mediate histone H3 'Lys-23' (H3K23ac) acetylation. Positively regulates the transcription of RUNX1 and RUNX2. This chain is Peregrin, found in Homo sapiens (Human).